A 513-amino-acid polypeptide reads, in one-letter code: ATP synthase subunit alpha (513 aa).

172-179 is an ATP binding site; that stretch reads GDRQTGKT.

Belongs to the ATPase alpha/beta chains family. F-type ATPases have 2 components, CF(1) - the catalytic core - and CF(0) - the membrane proton channel. CF(1) has five subunits: alpha(3), beta(3), gamma(1), delta(1), epsilon(1). CF(0) has three main subunits: a(1), b(2) and c(9-12). The alpha and beta chains form an alternating ring which encloses part of the gamma chain. CF(1) is attached to CF(0) by a central stalk formed by the gamma and epsilon chains, while a peripheral stalk is formed by the delta and b chains.

It localises to the cell inner membrane. The catalysed reaction is ATP + H2O + 4 H(+)(in) = ADP + phosphate + 5 H(+)(out). Its function is as follows. Produces ATP from ADP in the presence of a proton gradient across the membrane. The alpha chain is a regulatory subunit. In Gluconacetobacter diazotrophicus (strain ATCC 49037 / DSM 5601 / CCUG 37298 / CIP 103539 / LMG 7603 / PAl5), this protein is ATP synthase subunit alpha.